The primary structure comprises 137 residues: uncharacterized protein (137 aa).

The protein to E.coli YfdK.

This is an uncharacterized protein from Escherichia coli (strain K12).